Here is a 102-residue protein sequence, read N- to C-terminus: Cuticle protein 10.9 (102 aa).

Position 1 is a pyrrolidone carboxylic acid (Gln1). The segment at 1–45 (QLAEQYPPHPYSFSYDATDETGARISTSESGDESNSKTGSYSYQT) is disordered. The Chitin-binding type R&amp;R domain maps to 8-74 (PHPYSFSYDA…SIDTNEPGTK (67 aa)). Residues 36-45 (SKTGSYSYQT) show a composition bias toward polar residues.

Component of the cuticle of the tick. Binds chitin. The chain is Cuticle protein 10.9 from Ixodes ricinus (Common tick).